The sequence spans 410 residues: Glycylpeptide N-tetradecanoyltransferase (410 aa).

F30, W31, F162, L163, C164, V165, S171, R173, L174, and A175 together coordinate tetradecanoyl-CoA.

This sequence belongs to the NMT family. Heterodimer composed of NMT and AK2; AK2 myristoylation stabilizes the complex.

The protein localises to the cytoplasm. It catalyses the reaction N-terminal glycyl-[protein] + tetradecanoyl-CoA = N-tetradecanoylglycyl-[protein] + CoA + H(+). Its function is as follows. Adds a myristoyl group to the N-terminal glycine residue of certain cellular proteins. Myristoylates adenylate kinase AK2. During the asexual blood stage, may myristoylate proteins such as ARO, CDPK1 and GAP45. Probably by mediating protein myristoylation, plays a role in the assembly of the inner membrane complex during the early stages of schizogony and in the formation of rhoptries in the late stages and thus merozoite egress. This is Glycylpeptide N-tetradecanoyltransferase from Plasmodium falciparum (isolate 3D7).